We begin with the raw amino-acid sequence, 255 residues long: Putative Myb family transcription factor At1g14600 (255 aa).

The region spanning 20 to 80 (RSPVPRLRWT…HLQMYRGSRI (61 aa)) is the HTH myb-type domain. The H-T-H motif DNA-binding region spans 51-76 (PKLVLKIMDVKGLTISHVKSHLQMYR). The tract at residues 80 to 110 (ITLLGKPEESSSPSSRRRRRQDNEEDHLHDN) is disordered.

It is found in the nucleus. Its function is as follows. Putative transcription factor. The polypeptide is Putative Myb family transcription factor At1g14600 (Arabidopsis thaliana (Mouse-ear cress)).